The primary structure comprises 217 residues: Imidazole glycerol phosphate synthase subunit HisH (217 aa).

The region spanning 3–217 (TIAIVDYGVG…LYRNFVHWNP (215 aa)) is the Glutamine amidotransferase type-1 domain. Cysteine 82 functions as the Nucleophile in the catalytic mechanism. Catalysis depends on residues histidine 197 and glutamate 199.

In terms of assembly, heterodimer of HisH and HisF.

It is found in the cytoplasm. The enzyme catalyses 5-[(5-phospho-1-deoxy-D-ribulos-1-ylimino)methylamino]-1-(5-phospho-beta-D-ribosyl)imidazole-4-carboxamide + L-glutamine = D-erythro-1-(imidazol-4-yl)glycerol 3-phosphate + 5-amino-1-(5-phospho-beta-D-ribosyl)imidazole-4-carboxamide + L-glutamate + H(+). It carries out the reaction L-glutamine + H2O = L-glutamate + NH4(+). It participates in amino-acid biosynthesis; L-histidine biosynthesis; L-histidine from 5-phospho-alpha-D-ribose 1-diphosphate: step 5/9. Functionally, IGPS catalyzes the conversion of PRFAR and glutamine to IGP, AICAR and glutamate. The HisH subunit catalyzes the hydrolysis of glutamine to glutamate and ammonia as part of the synthesis of IGP and AICAR. The resulting ammonia molecule is channeled to the active site of HisF. This is Imidazole glycerol phosphate synthase subunit HisH from Cupriavidus pinatubonensis (strain JMP 134 / LMG 1197) (Cupriavidus necator (strain JMP 134)).